The chain runs to 1177 residues: Lon protease homolog, mitochondrial (1177 aa).

2 disordered regions span residues 72 to 197 (RTNS…KSPA) and 353 to 386 (AKKA…DSST). Basic and acidic residues predominate over residues 103-150 (RGRELWVQEKDKSDKPEKSDKPDKTDKTDKDKPEKQDKDKTDKPEKTK). Positions 154 to 182 (TPSSTASTGAGEAAAPPSAPPSGSGSSSS) are enriched in low complexity. A Lon N-terminal domain is found at 203–505 (ILAVPISDRP…RALILLKREH (303 aa)). Positions 353 to 383 (AKKAKSGKTEDSKHDSKVTSKDGKETTEKYD) are enriched in basic and acidic residues. 657 to 664 (GPPGVGKT) is a binding site for ATP. The segment covering 883–916 (EKDKESAEKKTTKSKSKEVNEEPAAKEEKDKATE) has biased composition (basic and acidic residues). The tract at residues 883-932 (EKDKESAEKKTTKSKSKEVNEEPAAKEEKDKATESAESSETKVGTKAPPV) is disordered. The 187-residue stretch at 964 to 1150 (DPPPGVVMGL…QDVYDVVFQG (187 aa)) folds into the Lon proteolytic domain. Catalysis depends on residues Ser1056 and Lys1099.

Belongs to the peptidase S16 family. In terms of assembly, homohexamer or homoheptamer. Organized in a ring with a central cavity.

Its subcellular location is the mitochondrion matrix. It catalyses the reaction Hydrolysis of proteins in presence of ATP.. Functionally, ATP-dependent serine protease that mediates the selective degradation of misfolded, unassembled or oxidatively damaged polypeptides as well as certain short-lived regulatory proteins in the mitochondrial matrix. May also have a chaperone function in the assembly of inner membrane protein complexes. Participates in the regulation of mitochondrial gene expression and in the maintenance of the integrity of the mitochondrial genome. Binds to mitochondrial DNA in a site-specific manner. This chain is Lon protease homolog, mitochondrial, found in Yarrowia lipolytica (strain CLIB 122 / E 150) (Yeast).